Consider the following 508-residue polypeptide: Probable metalloreductase AIM14 (508 aa).

8 consecutive transmembrane segments (helical) span residues 18–38 (LPYGYYVLGVIVFYTIFLIVM), 70–90 (PLLLLLVFVPFIHKYSLVAYI), 100–120 (LSYVLVILNVLLTLRPANPIL), 137–157 (FVTVIGIIHGIGFIVKWSLDP), 168–188 (LFNFIGVIAFVPLFILMFASV), 198–218 (SFYVIHQLGQWAMVFLVPIHA), 222–242 (VTVPYFFILLALYIWRGISYI), and 347–367 (VAIVVGGSGISFGLSIFKYLQ). One can recognise a Ferric oxidoreductase domain in the interval 97–214 (LGRLSYVLVI…LGQWAMVFLV (118 aa)). The FAD-binding FR-type domain maps to 241-361 (YIYYSTTVNV…GGSGISFGLS (121 aa)).

This sequence belongs to the ferric reductase (FRE) family. AIM14 subfamily.

Its subcellular location is the membrane. In terms of biological role, probable cell surface metalloreductase. May be involved in iron or copper homeostasis. The protein is Probable metalloreductase AIM14 (AIM14) of Kluyveromyces lactis (strain ATCC 8585 / CBS 2359 / DSM 70799 / NBRC 1267 / NRRL Y-1140 / WM37) (Yeast).